The sequence spans 51 residues: Large ribosomal subunit protein eL39 (51 aa).

Residues 1–23 (MPSQKSFRTKQKLAKAQKQNRPL) are disordered.

This sequence belongs to the eukaryotic ribosomal protein eL39 family. As to quaternary structure, component of the large ribosomal subunit. Mature ribosomes consist of a small (40S) and a large (60S) subunit. The 40S subunit contains about 32 different proteins and 1 molecule of RNA (18S). The 60S subunit contains 45 different proteins and 3 molecules of RNA (25S, 5.8S and 5S).

The protein resides in the cytoplasm. Functionally, component of the ribosome, a large ribonucleoprotein complex responsible for the synthesis of proteins in the cell. The small ribosomal subunit (SSU) binds messenger RNAs (mRNAs) and translates the encoded message by selecting cognate aminoacyl-transfer RNA (tRNA) molecules. The large subunit (LSU) contains the ribosomal catalytic site termed the peptidyl transferase center (PTC), which catalyzes the formation of peptide bonds, thereby polymerizing the amino acids delivered by tRNAs into a polypeptide chain. The nascent polypeptides leave the ribosome through a tunnel in the LSU and interact with protein factors that function in enzymatic processing, targeting, and the membrane insertion of nascent chains at the exit of the ribosomal tunnel. In Candida albicans (strain SC5314 / ATCC MYA-2876) (Yeast), this protein is Large ribosomal subunit protein eL39.